The following is a 140-amino-acid chain: Putative nickel-responsive regulator (140 aa).

4 residues coordinate Ni(2+): His81, His92, His94, and Cys100.

The protein belongs to the transcriptional regulatory CopG/NikR family. It depends on Ni(2+) as a cofactor.

Transcriptional regulator. This chain is Putative nickel-responsive regulator, found in Methanococcoides burtonii (strain DSM 6242 / NBRC 107633 / OCM 468 / ACE-M).